The following is a 227-amino-acid chain: Cytochrome c oxidase subunit 2 (227 aa).

At 1-14 (MAYPFELGFQDATS) the chain is on the mitochondrial intermembrane side. The chain crosses the membrane as a helical span at residues 15–45 (PIMEELLHFHDHTLMIVFLISSLVLYIISLM). At 46–59 (LTTKLTHTSTMDAQ) the chain is on the mitochondrial matrix side. The helical transmembrane segment at 60 to 87 (EIETIWTILPAIILILIALPSLRILYMM) threads the bilayer. Residues 88 to 227 (DEINDPSLTV…HFENWSSSML (140 aa)) are Mitochondrial intermembrane-facing. His161, Cys196, Glu198, Cys200, His204, and Met207 together coordinate Cu cation. Residue Glu198 participates in Mg(2+) binding.

Belongs to the cytochrome c oxidase subunit 2 family. Component of the cytochrome c oxidase (complex IV, CIV), a multisubunit enzyme composed of 14 subunits. The complex is composed of a catalytic core of 3 subunits MT-CO1, MT-CO2 and MT-CO3, encoded in the mitochondrial DNA, and 11 supernumerary subunits COX4I, COX5A, COX5B, COX6A, COX6B, COX6C, COX7A, COX7B, COX7C, COX8 and NDUFA4, which are encoded in the nuclear genome. The complex exists as a monomer or a dimer and forms supercomplexes (SCs) in the inner mitochondrial membrane with NADH-ubiquinone oxidoreductase (complex I, CI) and ubiquinol-cytochrome c oxidoreductase (cytochrome b-c1 complex, complex III, CIII), resulting in different assemblies (supercomplex SCI(1)III(2)IV(1) and megacomplex MCI(2)III(2)IV(2)). Found in a complex with TMEM177, COA6, COX18, COX20, SCO1 and SCO2. Interacts with TMEM177 in a COX20-dependent manner. Interacts with COX20. Interacts with COX16. The cofactor is Cu cation.

Its subcellular location is the mitochondrion inner membrane. It carries out the reaction 4 Fe(II)-[cytochrome c] + O2 + 8 H(+)(in) = 4 Fe(III)-[cytochrome c] + 2 H2O + 4 H(+)(out). Component of the cytochrome c oxidase, the last enzyme in the mitochondrial electron transport chain which drives oxidative phosphorylation. The respiratory chain contains 3 multisubunit complexes succinate dehydrogenase (complex II, CII), ubiquinol-cytochrome c oxidoreductase (cytochrome b-c1 complex, complex III, CIII) and cytochrome c oxidase (complex IV, CIV), that cooperate to transfer electrons derived from NADH and succinate to molecular oxygen, creating an electrochemical gradient over the inner membrane that drives transmembrane transport and the ATP synthase. Cytochrome c oxidase is the component of the respiratory chain that catalyzes the reduction of oxygen to water. Electrons originating from reduced cytochrome c in the intermembrane space (IMS) are transferred via the dinuclear copper A center (CU(A)) of subunit 2 and heme A of subunit 1 to the active site in subunit 1, a binuclear center (BNC) formed by heme A3 and copper B (CU(B)). The BNC reduces molecular oxygen to 2 water molecules using 4 electrons from cytochrome c in the IMS and 4 protons from the mitochondrial matrix. This Tamias townsendii (Townsend's chipmunk) protein is Cytochrome c oxidase subunit 2 (MT-CO2).